Reading from the N-terminus, the 500-residue chain is uncharacterized protein (500 aa).

Residues 27-47 (IFALILIVFGFIIAPLLPGIF) form a helical membrane-spanning segment.

The protein localises to the membrane. This is an uncharacterized protein from Borreliella burgdorferi (strain ATCC 35210 / DSM 4680 / CIP 102532 / B31) (Borrelia burgdorferi).